Reading from the N-terminus, the 66-residue chain is MAKGKEVRVRVILECTSCVRNGVNKESRGISRYITQKNRHNTPSRLELRKFCPYCYKHTLHGEIKK.

The protein belongs to the bacterial ribosomal protein bL33 family.

Its subcellular location is the plastid. It localises to the chloroplast. The sequence is that of Large ribosomal subunit protein bL33c from Citrus sinensis (Sweet orange).